Reading from the N-terminus, the 494-residue chain is Aldehyde dehydrogenase (494 aa).

NAD(+) is bound at residue 223–228 (GSTTAG). Active-site residues include Glu245 and Cys279.

This sequence belongs to the aldehyde dehydrogenase family.

It carries out the reaction an aldehyde + NAD(+) + H2O = a carboxylate + NADH + 2 H(+). Its pathway is mycotoxin biosynthesis. Aldehyde dehydrogenase; part of the gene cluster that mediates the biosynthesis of the selective antifungal agent ascochitine, an o-quinone methide that plays a possible protective role against other microbial competitors in nature and is considered to be important for pathogenicity of legume-associated Didymella species. The pathway probably begins with the synthesis of a keto-aldehyde intermediate by the ascochitine non-reducing polyketide synthase pksAC from successive condensations of 4 malonyl-CoA units, presumably with a simple acetyl-CoA starter unit. Release of the keto-aldehyde intermediate is consistent with the presence of the C-terminal reductive release domain. The HR-PKS (orf7) probably makes a diketide starter unit which is passed to the non-reducing polyketide synthase pksAC for further extension, producing ascochital and ascochitine. The aldehyde dehydrogenase (orf1), the 2-oxoglutarate-dependent dioxygenase (orf3) and the dehydrogenase (orf9) are probably involved in subsequent oxidations of methyl groups to the carboxylic acid of the heterocyclic ring. The ascochitine gene cluster also includes a gene encoding a short peptide with a cupin domain (orf2) that is often found in secondary metabolite gene clusters and which function has still to be determined. The protein is Aldehyde dehydrogenase of Didymella fabae (Leaf and pod spot disease fungus).